A 222-amino-acid polypeptide reads, in one-letter code: LHFPL tetraspan subfamily member 3 protein (222 aa).

Transmembrane regions (helical) follow at residues 22–42 (IGVLWAIFTICFAIINVVCFI), 96–116 (FFIGLSMMLIIACIVCFTLFF), 126–146 (ICAWMQLTFAACLVLGCMIFP), and 177–197 (ILAIIGILDALILSFLAVVLG).

This sequence belongs to the LHFP family. In terms of tissue distribution, brain-specific.

The protein localises to the membrane. This Mus musculus (Mouse) protein is LHFPL tetraspan subfamily member 3 protein.